We begin with the raw amino-acid sequence, 587 residues long: MQKPPLLLRRPLPPKFTKLSLHEKKTHTAKTGKIESLHVAFTEDETTSIKMDRTRFPDVLRNQSLTPINIQNIFLDHCVQERVTAISSPQKSTKHVREQIPDTATGSIFFPHCNSASTRIFGKQTNKMESSRKFKTMKDVYTEKRLENILILSSKFSKPKSTPGSVIAQKLEKMHPKHQPLPESPGYTYQHISRDLSATVPSPPPMTVSMKPEGQWPEHFKSTATLTLRVTEFPGFVSLPTPVLPRKPHRQSVIETLVTENGNIESVPKQIPPRPPEGLTKTEKIESEIHVVRGEGFKTVAATRYETITAMTNLAIVNCQVYGRNALNLKGFFILNCPDLTPLAFQLIYLNLSFNDLHYFPTEILCLKNLQILKLRNNPIKEIPSEIQQLEFLRIFTIAFNLITVLPIGLFSLSYLEELDVSYNELTFIPNEIQKLRSLEKLTVDGNELSFFPHGILKLNLTKIQFENNFTHPCFWRDNYLNNPQQLTQIISLFIVQNKLHKFYDKIPVEVQKLLKCTSRCEWCHGPKFGEGFRVIRSCDIFGASQLPVMFYVCSPSCYRRIKESSFVLDGSPSRRIALDVELSKEL.

LRR repeat units follow at residues 251–274 (QSVI…IPPR), 344–367 (AFQL…ILCL), 368–390 (KNLQ…IQQL), 392–413 (FLRI…LFSL), 414–436 (SYLE…IQKL), 437–459 (RSLE…ILKL), and 487–510 (LTQI…IPVE).

This Homo sapiens (Human) protein is Leucine-rich repeat-containing protein 63 (LRRC63).